Consider the following 162-residue polypeptide: Caveolin-2 (162 aa).

Topologically, residues 1–86 (MGLETEKADA…FEVSKYLIYK (86 aa)) are cytoplasmic. Residue tyrosine 19 is modified to Phosphotyrosine; by SRC. The tract at residues 19–40 (YSRHSGLGYPEPEKCAKSTQDR) is disordered. A phosphoserine mark is found at serine 20 and serine 23. At tyrosine 27 the chain carries Phosphotyrosine; by SRC. Residues 29–40 (EPEKCAKSTQDR) are compositionally biased toward basic and acidic residues. Serine 36 bears the Phosphoserine mark. The helical intramembrane region spans 87–107 (VLTVLLAIPLAFVAGILFATL). At 108-162 (SCLHIWIVVPFVKTCLMVLPSVQTVWHSITDGFIAPLYKSMGLIFSSISLRLSPE) the chain is on the cytoplasmic side.

It belongs to the caveolin family. Monomer or homodimer. Interacts with CAV1; the interaction forms a stable heterooligomeric complex that is required for targeting to lipid rafts and for caveolae formation. Tyrosine phosphorylated forms do not form heterooligomers with the Tyr-19-phosphorylated form existing as a monomer or dimer, and the Tyr-27-form as a monomer only. Interacts (tyrosine phosphorylated form) with the SH2 domain-containing proteins, RASA1, NCK1 and SRC. Interacts (tyrosine phosphorylated form) with INSR, the interaction (Tyr-27-phosphorylated form) is increased on insulin stimulation. Interacts (Tyr-19 phosphorylated form) with MAPK1 (phosphorylated form); the interaction, promoted by insulin, leads to nuclear location and MAPK1 activation. Interacts with STAT3; the interaction is increased on insulin-induced tyrosine phosphorylation leading to STAT activation. Phosphorylated on serine and tyrosine residues. CAV1 promotes phosphorylation on Ser-23 which then targets the complex to the plasma membrane, lipid rafts and caveolae. Phosphorylation on Ser-36 appears to modulate mitosis in endothelial cells. Phosphorylation on both Tyr-19 and Tyr-27 is required for insulin-induced 'Ser-727' phosphorylation of STAT3 and its activation. Phosphorylation on Tyr-19 is required for insulin-induced phosphorylation of MAPK1 and DNA binding of STAT3. Tyrosine phosphorylation is induced by both EGF and insulin (By. similarity).

It is found in the nucleus. Its subcellular location is the cytoplasm. It localises to the golgi apparatus membrane. The protein resides in the cell membrane. The protein localises to the membrane. It is found in the caveola. In terms of biological role, may act as a scaffolding protein within caveolar membranes. Interacts directly with G-protein alpha subunits and can functionally regulate their activity. Acts as an accessory protein in conjunction with CAV1 in targeting to lipid rafts and driving caveolae formation. The Ser-36 phosphorylated form has a role in modulating mitosis in endothelial cells. Positive regulator of cellular mitogenesis of the MAPK signaling pathway. Required for the insulin-stimulated nuclear translocation and activation of MAPK1 and STAT3, and the subsequent regulation of cell cycle progression. This chain is Caveolin-2 (CAV2), found in Didelphis virginiana (North American opossum).